A 2215-amino-acid polypeptide reads, in one-letter code: Unconventional myosin-VIIa (2215 aa).

One can recognise a Myosin motor domain in the interval 65–741 (HGVEDMIRLG…HDMLLEVERD (677 aa)). Position 158–165 (158–165 (GESGAGKT)) interacts with ATP. Residues 632–639 (FVRCIKPN) form an actin-binding region. IQ domains lie at 745–765 (TDRV…SNFL), 768–788 (KSAA…KNYE), 791–811 (RLGF…KQYR), 814–834 (RQRI…KAFR), and 837–857 (LWAV…RLHR). The tract at residues 858–935 (RLRVEYQRRL…LEQMEKARHE (78 aa)) is SAH. Residues 1017 to 1253 (YTRRPLKQPL…PSWLELQATK (237 aa)) form the MyTH4 1 domain. Positions 1258 to 1602 (IMLPVTFMDG…LVVTFLEGLR (345 aa)) constitute an FERM 1 domain. Residue Thr-1563 is modified to Phosphothreonine. Ser-1569 carries the phosphoserine modification. At Thr-1571 the chain carries Phosphothreonine. The region spanning 1603 to 1672 (KRSKYVVALQ…PTDCVYVMPT (70 aa)) is the SH3 domain. Residues 1747–1896 (HTREPLKQAL…PHLVEVEAIQ (150 aa)) enclose the MyTH4 2 domain. Residues 1902–2205 (IFHKVYFPDD…SYISQMLTAM (304 aa)) form the FERM 2 domain.

Belongs to the TRAFAC class myosin-kinesin ATPase superfamily. Myosin family. As to quaternary structure, might homodimerize in a two headed molecule through the formation of a coiled-coil rod. Identified in a complex with USH1C and USH1G. Interacts with MYRIP. Interacts with RPE65. Interacts with CIB2. May interact with CALM. Interacts with WHRN. Interacts with PLEKHB1 (via PH domain). Interacts with PCDH15. Interacts with TWF2. Interacts with USH1G. Interacts with MYH9. Interacts (via MyTH4-FERM domains) with cytoplasmic regions of ADGRV1 and USH2A. Interacts with PDZD7 (via MyTH4-FERM domains). Interacts with CALML4. Detected in mechanosensory stereocilia of cochlea hair cells (at protein level). Expressed in the retina, cochlea, kidney and liver.

It localises to the cytoplasm. The protein resides in the cell cortex. Its subcellular location is the cytoskeleton. It is found in the synapse. In terms of biological role, myosins are actin-based motor molecules with ATPase activity. Unconventional myosins serve in intracellular movements. Their highly divergent tails bind to membranous compartments, which are then moved relative to actin filaments. In the retina, plays an important role in the renewal of the outer photoreceptor disks. Plays an important role in the distribution and migration of retinal pigment epithelial (RPE) melanosomes and phagosomes, and in the regulation of opsin transport in retinal photoreceptors. Mediates intracellular transport of RPE65 in the retina pigment epithelium. In the inner ear, plays an important role in differentiation, morphogenesis and organization of cochlear hair cell bundles. Motor protein that is a part of the functional network formed by USH1C, USH1G, CDH23 and MYO7A that mediates mechanotransduction in cochlear hair cells. Required for normal hearing. Involved in hair-cell vesicle trafficking of aminoglycosides, which are known to induce ototoxicity. This chain is Unconventional myosin-VIIa (Myo7a), found in Mus musculus (Mouse).